Here is a 338-residue protein sequence, read N- to C-terminus: Aspartate-semialdehyde dehydrogenase (338 aa).

NADP(+) is bound by residues Ser13–Val16 and Arg41–Ser42. Residue Arg101 participates in phosphate binding. Cys132 serves as the catalytic Acyl-thioester intermediate. Gln159 lines the substrate pocket. NADP(+) is bound by residues Ser162–Gly163 and Pro187. Lys216 is a phosphate binding site. Residue Arg238 participates in substrate binding. The active-site Proton acceptor is the His245. Asn317 is an NADP(+) binding site.

This sequence belongs to the aspartate-semialdehyde dehydrogenase family. In terms of assembly, homodimer.

The catalysed reaction is L-aspartate 4-semialdehyde + phosphate + NADP(+) = 4-phospho-L-aspartate + NADPH + H(+). It participates in amino-acid biosynthesis; L-lysine biosynthesis via DAP pathway; (S)-tetrahydrodipicolinate from L-aspartate: step 2/4. The protein operates within amino-acid biosynthesis; L-methionine biosynthesis via de novo pathway; L-homoserine from L-aspartate: step 2/3. It functions in the pathway amino-acid biosynthesis; L-threonine biosynthesis; L-threonine from L-aspartate: step 2/5. In terms of biological role, catalyzes the NADPH-dependent formation of L-aspartate-semialdehyde (L-ASA) by the reductive dephosphorylation of L-aspartyl-4-phosphate. This Shewanella sp. (strain DB6705) protein is Aspartate-semialdehyde dehydrogenase.